The primary structure comprises 396 residues: Proteinase-activated receptor 4 (396 aa).

The first 16 residues, 1-16 (MCWPLLYPLVLGLSIS), serve as a signal peptide directing secretion. Residues 17–59 (LAEGIQTPSIYDDVESTRGSHEGPLGPTVELKEPKSSDKPNPR) constitute a propeptide, removed for receptor activation. Residues 28–62 (DDVESTRGSHEGPLGPTVELKEPKSSDKPNPRGYP) form a disordered region. The segment covering 46-57 (ELKEPKSSDKPN) has biased composition (basic and acidic residues). The Extracellular portion of the chain corresponds to 60–94 (GYPGKFCANDSDTLELPASSQALLLGWVPTRLVPA). Asn-68 is a glycosylation site (N-linked (GlcNAc...) asparagine). The chain crosses the membrane as a helical span at residues 95 to 115 (LYGLVVAVGLPANGLALWVLA). At 116–120 (TRVPR) the chain is on the cytoplasmic side. The helical transmembrane segment at 121–141 (LPSTILLMNLAVADLLLALVL) threads the bilayer. Residues 142-162 (PPRLAYHLRGQRWPFGEAACR) are Extracellular-facing. Cys-161 and Cys-240 are oxidised to a cystine. A helical membrane pass occupies residues 163–183 (VATAALYGHMYGSVLLLAAVS). Residues 184–203 (LDRYLALVHPLRARALRGQR) lie on the Cytoplasmic side of the membrane. A helical transmembrane segment spans residues 204-224 (LTTGLCLVAWLSAATLALPLT). Topologically, residues 225–255 (LHRQTFRLAGSDRMLCHDALPLTEQTSHWRP) are extracellular. Residues 256 to 276 (AFICLAVLGCFVPLLAMGLCY) traverse the membrane as a helical segment. The Cytoplasmic segment spans residues 277-295 (GATLRALAANGQRYSHALR). Residues 296–316 (LTALVLFSAVASFTPSNVLLV) traverse the membrane as a helical segment. Residues 317–331 (LHYSNPSPEAWGNLY) lie on the Extracellular side of the membrane. The helical transmembrane segment at 332–355 (GAYVPSLALSTLNSCVDPFIYYYV) threads the bilayer. Over 356–396 (SHEFREKVRAMLCRQPEASSSSQASREAGSRGTAICSSTLL) the chain is Cytoplasmic.

It belongs to the G-protein coupled receptor 1 family. A proteolytic cleavage generates a new N-terminus that functions as a tethered ligand. Highly expressed in the spleen. Slight expression in the heart, lung, skeletal muscle and kidney. No detectable expression in brain, liver or testis. Also detected in platelets.

It is found in the cell membrane. Functionally, receptor for activated thrombin or trypsin coupled to G proteins that stimulate phosphoinositide hydrolysis. May play a role in platelets activation. The chain is Proteinase-activated receptor 4 (F2rl3) from Mus musculus (Mouse).